A 234-amino-acid chain; its full sequence is Leucyl/phenylalanyl-tRNA--protein transferase (234 aa).

Belongs to the L/F-transferase family.

It is found in the cytoplasm. The enzyme catalyses N-terminal L-lysyl-[protein] + L-leucyl-tRNA(Leu) = N-terminal L-leucyl-L-lysyl-[protein] + tRNA(Leu) + H(+). The catalysed reaction is N-terminal L-arginyl-[protein] + L-leucyl-tRNA(Leu) = N-terminal L-leucyl-L-arginyl-[protein] + tRNA(Leu) + H(+). It carries out the reaction L-phenylalanyl-tRNA(Phe) + an N-terminal L-alpha-aminoacyl-[protein] = an N-terminal L-phenylalanyl-L-alpha-aminoacyl-[protein] + tRNA(Phe). Functions in the N-end rule pathway of protein degradation where it conjugates Leu, Phe and, less efficiently, Met from aminoacyl-tRNAs to the N-termini of proteins containing an N-terminal arginine or lysine. This is Leucyl/phenylalanyl-tRNA--protein transferase from Citrobacter koseri (strain ATCC BAA-895 / CDC 4225-83 / SGSC4696).